We begin with the raw amino-acid sequence, 530 residues long: Glucose-6-phosphate isomerase (530 aa).

The active-site Proton donor is glutamate 356. Catalysis depends on residues histidine 387 and lysine 502.

This sequence belongs to the GPI family.

It localises to the cytoplasm. The catalysed reaction is alpha-D-glucose 6-phosphate = beta-D-fructose 6-phosphate. It functions in the pathway carbohydrate biosynthesis; gluconeogenesis. Its pathway is carbohydrate degradation; glycolysis; D-glyceraldehyde 3-phosphate and glycerone phosphate from D-glucose: step 2/4. Catalyzes the reversible isomerization of glucose-6-phosphate to fructose-6-phosphate. The polypeptide is Glucose-6-phosphate isomerase (Borrelia garinii subsp. bavariensis (strain ATCC BAA-2496 / DSM 23469 / PBi) (Borreliella bavariensis)).